The chain runs to 346 residues: S-adenosylmethionine:tRNA ribosyltransferase-isomerase (346 aa).

It belongs to the QueA family. In terms of assembly, monomer.

The protein resides in the cytoplasm. It carries out the reaction 7-aminomethyl-7-carbaguanosine(34) in tRNA + S-adenosyl-L-methionine = epoxyqueuosine(34) in tRNA + adenine + L-methionine + 2 H(+). It participates in tRNA modification; tRNA-queuosine biosynthesis. In terms of biological role, transfers and isomerizes the ribose moiety from AdoMet to the 7-aminomethyl group of 7-deazaguanine (preQ1-tRNA) to give epoxyqueuosine (oQ-tRNA). In Neisseria meningitidis serogroup C (strain 053442), this protein is S-adenosylmethionine:tRNA ribosyltransferase-isomerase.